The primary structure comprises 508 residues: Lysine--tRNA ligase (508 aa).

Mg(2+) is bound by residues Glu418 and Glu425.

This sequence belongs to the class-II aminoacyl-tRNA synthetase family. As to quaternary structure, homodimer. Requires Mg(2+) as cofactor.

It localises to the cytoplasm. The enzyme catalyses tRNA(Lys) + L-lysine + ATP = L-lysyl-tRNA(Lys) + AMP + diphosphate. The polypeptide is Lysine--tRNA ligase (Burkholderia pseudomallei (strain K96243)).